The following is a 245-amino-acid chain: 1-(5-phosphoribosyl)-5-[(5-phosphoribosylamino)methylideneamino] imidazole-4-carboxamide isomerase (245 aa).

Asp-7 functions as the Proton acceptor in the catalytic mechanism. Residue Asp-129 is the Proton donor of the active site.

This sequence belongs to the HisA/HisF family.

Its subcellular location is the cytoplasm. The catalysed reaction is 1-(5-phospho-beta-D-ribosyl)-5-[(5-phospho-beta-D-ribosylamino)methylideneamino]imidazole-4-carboxamide = 5-[(5-phospho-1-deoxy-D-ribulos-1-ylimino)methylamino]-1-(5-phospho-beta-D-ribosyl)imidazole-4-carboxamide. Its pathway is amino-acid biosynthesis; L-histidine biosynthesis; L-histidine from 5-phospho-alpha-D-ribose 1-diphosphate: step 4/9. In Aliivibrio fischeri (strain MJ11) (Vibrio fischeri), this protein is 1-(5-phosphoribosyl)-5-[(5-phosphoribosylamino)methylideneamino] imidazole-4-carboxamide isomerase.